A 302-amino-acid chain; its full sequence is Lysosomal thioesterase PPT2 (302 aa).

The N-terminal stretch at 1–27 (MPGLWRQRLPSAWALLLLPFLPLLMPA) is a signal peptide. The N-linked (GlcNAc...) asparagine glycan is linked to Asn-60. Cystine bridges form between Cys-109-Cys-117 and Cys-165-Cys-176. Ser-111 (nucleophile) is an active-site residue. N-linked (GlcNAc...) asparagine glycans are attached at residues Asn-190 and Asn-206. Residue Asp-228 is part of the active site. The N-linked (GlcNAc...) asparagine glycan is linked to Asn-245. Cys-276 and Cys-296 are disulfide-bonded. Residue His-283 is part of the active site. An N-linked (GlcNAc...) asparagine glycan is attached at Asn-289.

Belongs to the palmitoyl-protein thioesterase family. In terms of tissue distribution, expressed throughout the brain, primarily in neurons, and at lower levels in glial cells.

Its subcellular location is the lysosome. It catalyses the reaction hexadecanoyl-CoA + H2O = hexadecanoate + CoA + H(+). It carries out the reaction S-hexadecanoyl-N-acetylcysteamine + H2O = N-acetylcysteamine + hexadecanoate + H(+). Functionally, catalyzes the cleavage of thioester bonds from S-palmitoyl-CoA or S-palmitoyl-N-acetylcysteamine (unbranched structures) but does not have activity against palmitoylcysteine or palmitoylated proteins, branched structures or bulky head groups. Conversely, hydrolyzes both long and short chain fatty acyl-CoA substrate. The protein is Lysosomal thioesterase PPT2 (Ppt2) of Mus musculus (Mouse).